A 187-amino-acid chain; its full sequence is Large ribosomal subunit protein uL5 (187 aa).

The protein belongs to the universal ribosomal protein uL5 family. Part of the 50S ribosomal subunit; part of the 5S rRNA/L5/L18/L25 subcomplex. Contacts the 5S rRNA and the P site tRNA. Forms a bridge to the 30S subunit in the 70S ribosome.

Its function is as follows. This is one of the proteins that bind and probably mediate the attachment of the 5S RNA into the large ribosomal subunit, where it forms part of the central protuberance. In the 70S ribosome it contacts protein S13 of the 30S subunit (bridge B1b), connecting the 2 subunits; this bridge is implicated in subunit movement. Contacts the P site tRNA; the 5S rRNA and some of its associated proteins might help stabilize positioning of ribosome-bound tRNAs. The polypeptide is Large ribosomal subunit protein uL5 (Mycobacterium bovis (strain ATCC BAA-935 / AF2122/97)).